We begin with the raw amino-acid sequence, 471 residues long: MDHDLDKFPLLSYVLHQHDSNLHAPPSMAAQETLLPSFPLLSNPEIMSMLTQSIPTTITQTLFVFNSLGSRPDPLAVSSARFKIAQIMDSLSPEEAAKESEIYAGVVRLDEVHDSYEKKLKDTEEELSRVYSTEVESMLRSGEEVNEKVLAVLKEAESGGTVERIDLSSQELKLIPEAFWKVVGLVYLNLSGNDLTFIPDAISKLKKLEELDVSSNSLESLPDSIGMLLNLRILNVNANNLTALPESIAHCRSLVELDASYNNLTSLPTNIGYGLQNLERLSIQLNKLRYFPGSISEMYNLKYLDAHMNEIHGIPNSIGRLTKLEVLNLSSNFNNLMGVPDTITDLTNLRELDLSNNQIQAIPDSFYRLRKLEKLNLDQNPLEIPSQEVATQGAEVVREFMRKRWGDIMAEQQQRIGVEAERHGDENGWVYWGTSMVTNLVSGVTHTIGFGGATSDGGDKKPGDSYFYHQI.

Positions 106-133 (VVRLDEVHDSYEKKLKDTEEELSRVYST) form a coiled coil. LRR repeat units follow at residues 159–182 (GGTV…FWKV), 183–205 (VGLV…ISKL), 206–229 (KKLE…GMLL), 231–251 (LRIL…IAHC), 253–275 (SLVE…GYGL), 276–298 (QNLE…ISEM), 300–321 (NLKY…IGRL), 324–346 (LEVL…ITDL), 347–369 (TNLR…FYRL), and 371–392 (KLEK…VATQ). A GVYW; degenerate motif is present at residues 393–405 (GAEVVREFMRKRW).

The protein belongs to the SHOC2 family. Widely expressed but preferentially in roots.

Functionally, leucine-rich repeat protein that likely mediates protein interactions, possibly in the context of signal transduction. The polypeptide is Plant intracellular Ras-group-related LRR protein 2 (PIRL2) (Arabidopsis thaliana (Mouse-ear cress)).